Consider the following 430-residue polypeptide: Solanesyl-diphosphate synthase 1, mitochondrial (430 aa).

The transit peptide at 1–31 (MSWRWALARRVAALGATSGGGDGATAQAQRL) directs the protein to the mitochondrion. 3 residues coordinate isopentenyl diphosphate: K133, R136, and H182. Mg(2+) contacts are provided by D189 and D193. Residue R198 coordinates an all-trans-polyprenyl diphosphate. Residue R199 participates in isopentenyl diphosphate binding. An all-trans-polyprenyl diphosphate-binding residues include K275, T276, Q313, and K330.

This sequence belongs to the FPP/GGPP synthase family. As to quaternary structure, homodimer. Mg(2+) serves as cofactor. Expressed in leaves, stems and roots. Highest expression in roots.

It is found in the mitochondrion. It catalyses the reaction 7 isopentenyl diphosphate + (2E)-geranyl diphosphate = all-trans-nonaprenyl diphosphate + 7 diphosphate. It functions in the pathway cofactor biosynthesis; ubiquinone biosynthesis. In terms of biological role, involved in the supply of solanesyl diphosphate for ubiquinone-9 (UQ-9) biosynthesis in mitochondria. Farnesyl diphosphate is the preferred substrate. The chain is Solanesyl-diphosphate synthase 1, mitochondrial from Oryza sativa subsp. japonica (Rice).